The chain runs to 231 residues: Octanoyl-[acyl-carrier-protein]:protein N-octanoyltransferase LIPT2, mitochondrial (231 aa).

A mitochondrion-targeting transit peptide spans M1–Q31. A BPL/LPL catalytic domain is found at G41–L224. Residues R85–H92, A154–G156, and G167–A169 each bind substrate. Catalysis depends on C185, which acts as the Acyl-thioester intermediate.

This sequence belongs to the LipB family.

The protein localises to the mitochondrion. It catalyses the reaction octanoyl-[ACP] + L-lysyl-[protein] = N(6)-octanoyl-L-lysyl-[protein] + holo-[ACP] + H(+). It participates in protein modification; protein lipoylation via endogenous pathway; protein N(6)-(lipoyl)lysine from octanoyl-[acyl-carrier-protein]: step 1/2. Functionally, catalyzes the transfer of endogenously produced octanoic acid from octanoyl-acyl-carrier-protein (octanoyl-ACP) onto the lipoyl domains of lipoate-dependent enzymes such as the protein H of the glycine cleavage system (GCSH). Lipoyl-ACP can also act as a substrate although octanoyl-ACP is likely to be the physiological substrate. This is Octanoyl-[acyl-carrier-protein]:protein N-octanoyltransferase LIPT2, mitochondrial from Homo sapiens (Human).